The chain runs to 512 residues: MSNILILDFGSQYTNVLAKKIRLLSVFCEVLPWNTPLEKILQKSPSGLIFSGGPHSVYQNNSPEVDKEIYNSNIPILGVCYGMQLIARDFGSEVQGGKSEFGYTPIVFYPSELFKGLADQDAFHTEIRMSHCDCVVVPPKDFFVIASSQHCPIAAIECPKKKLFGLQFHPEVSDSQDIGDKILSNFVKHICQTSETWKIETIEKQLIQGIREKVGETERVLLGLSGGVDSSVLAVLLHNALGDRLSCVFVDTGLLRKNEVEEVKQQFSSLGLEILVVDASEKFFHDLSGIEDPEQKRKVIGAAFIEVFDEASKNLDVQWLAQGTIYSDVIESAKSCDATQVIKSHHNVGGLPEKLNLKLLEPLRFLFKDEVRALGKVLGLPDVLISRHPFPGPGLGVRVLGEVRREYVEIVKNADSIFIEELKKANLYHKVSQAFAVFLPCKSVAVKGDCRHYGYTIALRAVESTDFMTACWPSLSREFLNRCSSRIINEIPEVCRVVYDISDKPPATIEWE.

The Glutamine amidotransferase type-1 domain maps to 3–196; it reads NILILDFGSQ…VKHICQTSET (194 aa). The Nucleophile role is filled by Cys-80. Active-site residues include His-169 and Glu-171. A GMPS ATP-PPase domain is found at 197-387; sequence WKIETIEKQL…LGLPDVLISR (191 aa). Position 225-231 (225-231) interacts with ATP; it reads SGGVDSS.

Homodimer.

The catalysed reaction is XMP + L-glutamine + ATP + H2O = GMP + L-glutamate + AMP + diphosphate + 2 H(+). It functions in the pathway purine metabolism; GMP biosynthesis; GMP from XMP (L-Gln route): step 1/1. Functionally, catalyzes the synthesis of GMP from XMP. In Chlamydia muridarum (strain MoPn / Nigg), this protein is GMP synthase [glutamine-hydrolyzing] (guaA).